The chain runs to 1273 residues: Ribulose bisphosphate carboxylase small subunit, chloroplastic (1273 aa).

The transit peptide at 1-134 (MPFDRQPLLS…AVLPFTSEKD (134 aa)) directs the protein to the chloroplast. 7 consecutive propeptides follow at residues 269–278 (GMAAMTGEKD), 412–421 (GMAAMTGEKD), 556–565 (GMAAMTGEKD), 699–708 (GMAAMTGEKD), 844–853 (GMAAMTGEKE), 987–996 (GMAAMTGEKD), and 1131–1140 (GMAAMTGEKE).

Belongs to the RuBisCO small chain family. As to quaternary structure, heterohexadecamer of 8 large and 8 small subunits. In terms of processing, eight small subunits are processed from a large polyprotein. All start with the same sequence but there is more heterogeneity at the C-terminus.

It localises to the plastid. The protein resides in the chloroplast. Functionally, ruBisCO catalyzes two reactions: the carboxylation of D-ribulose 1,5-bisphosphate, the primary event in carbon dioxide fixation, as well as the oxidative fragmentation of the pentose substrate. Both reactions occur simultaneously and in competition at the same active site. Although the small subunit is not catalytic it is essential for maximal activity. The polypeptide is Ribulose bisphosphate carboxylase small subunit, chloroplastic (Euglena gracilis).